Consider the following 354-residue polypeptide: Guanine nucleotide-binding protein G(i) subunit alpha (354 aa).

The N-myristoyl glycine moiety is linked to residue glycine 2. The S-palmitoyl cysteine moiety is linked to residue cysteine 3. Positions 32-354 constitute a G-alpha domain; it reads REVKLLLLGA…KNNLKDCGLF (323 aa). The segment at 35–48 is G1 motif; sequence KLLLLGAGESGKST. Residues 40–47, 175–181, 200–204, 269–272, and alanine 326 contribute to the GTP site; these read GAGESGKS, LRTRVKT, DVGGQ, and NKKD. Mg(2+) contacts are provided by serine 47 and threonine 181. Residues 173–181 are G2 motif; that stretch reads DVLRTRVKT. Residues 196–205 are G3 motif; that stretch reads FKMFDVGGQR. The interval 265–272 is G4 motif; the sequence is ILFLNKKD. Positions 324–329 are G5 motif; that stretch reads TCATDT.

The protein belongs to the G-alpha family. G(i/o/t/z) subfamily. In terms of assembly, g proteins are composed of 3 units; alpha, beta and gamma. The alpha chain contains the guanine nucleotide binding site.

Guanine nucleotide-binding proteins (G proteins) are involved as modulators or transducers in various transmembrane signaling systems. The G(i) proteins are involved in hormonal regulation of adenylate cyclase: they inhibit the cyclase in response to beta-adrenergic stimuli. In Lymnaea stagnalis (Great pond snail), this protein is Guanine nucleotide-binding protein G(i) subunit alpha.